A 173-amino-acid chain; its full sequence is Probable glutathione peroxidase 5 (173 aa).

Residue glycine 2 is the site of N-myristoyl glycine attachment. The active site involves cysteine 46.

It belongs to the glutathione peroxidase family. In terms of tissue distribution, ubiquitous.

It is found in the cell membrane. The enzyme catalyses 2 glutathione + H2O2 = glutathione disulfide + 2 H2O. In terms of biological role, may constitute a glutathione peroxidase-like protective system against oxidative stresses. In Arabidopsis thaliana (Mouse-ear cress), this protein is Probable glutathione peroxidase 5 (GPX5).